The following is a 555-amino-acid chain: Phosphomethylpyrimidine synthase (555 aa).

Residues N191, M220, Y249, H285, 305-307, 346-349, and E385 each bind substrate; these read SRG and DGLR. H389 contributes to the Zn(2+) binding site. Position 412 (Y412) interacts with substrate. A Zn(2+)-binding site is contributed by H453. 3 residues coordinate [4Fe-4S] cluster: C533, C536, and C541.

The protein belongs to the ThiC family. Homodimer. It depends on [4Fe-4S] cluster as a cofactor.

The enzyme catalyses 5-amino-1-(5-phospho-beta-D-ribosyl)imidazole + S-adenosyl-L-methionine = 4-amino-2-methyl-5-(phosphooxymethyl)pyrimidine + CO + 5'-deoxyadenosine + formate + L-methionine + 3 H(+). It participates in cofactor biosynthesis; thiamine diphosphate biosynthesis. Catalyzes the synthesis of the hydroxymethylpyrimidine phosphate (HMP-P) moiety of thiamine from aminoimidazole ribotide (AIR) in a radical S-adenosyl-L-methionine (SAM)-dependent reaction. This chain is Phosphomethylpyrimidine synthase, found in Ehrlichia ruminantium (strain Welgevonden).